A 142-amino-acid polypeptide reads, in one-letter code: MAP3K7 C-terminal-like protein (142 aa).

As to expression, ubiquitous.

The polypeptide is MAP3K7 C-terminal-like protein (Map3k7cl) (Mus musculus (Mouse)).